The primary structure comprises 79 residues: Conotoxin VnMKLT1-01121 (79 aa).

The first 22 residues, Met-1–Ala-22, serve as a signal peptide directing secretion. A propeptide spanning residues Asp-23 to Asn-48 is cleaved from the precursor. Cystine bridges form between Cys-53–Cys-70, Cys-60–Cys-74, and Cys-69–Cys-78.

This sequence belongs to the conotoxin O1 superfamily. In terms of tissue distribution, expressed by the venom duct.

The protein localises to the secreted. In Conus ventricosus (Mediterranean cone), this protein is Conotoxin VnMKLT1-01121.